Reading from the N-terminus, the 116-residue chain is MRHRCRVPQLGRPADQRKALLRALTTELIRHGQITTTLTRAKAVRSQADKMITLAKDGSLAARRQAMGYIYDKQLVHRLFDQAQERYSNRNGGYTRVVRTLRRRGDNAEMAIIELV.

Belongs to the bacterial ribosomal protein bL17 family. In terms of assembly, part of the 50S ribosomal subunit. Contacts protein L32.

The chain is Large ribosomal subunit protein bL17 from Gloeothece citriformis (strain PCC 7424) (Cyanothece sp. (strain PCC 7424)).